The primary structure comprises 114 residues: Large ribosomal subunit protein bL19 (114 aa).

The protein belongs to the bacterial ribosomal protein bL19 family.

Functionally, this protein is located at the 30S-50S ribosomal subunit interface and may play a role in the structure and function of the aminoacyl-tRNA binding site. In Acetivibrio thermocellus (strain ATCC 27405 / DSM 1237 / JCM 9322 / NBRC 103400 / NCIMB 10682 / NRRL B-4536 / VPI 7372) (Clostridium thermocellum), this protein is Large ribosomal subunit protein bL19.